The sequence spans 296 residues: 4-diphosphocytidyl-2-C-methyl-D-erythritol kinase (296 aa).

The active site involves K18. 102–112 is an ATP binding site; it reads PMGGGIGGGSS. Residue D144 is part of the active site.

Belongs to the GHMP kinase family. IspE subfamily.

The enzyme catalyses 4-CDP-2-C-methyl-D-erythritol + ATP = 4-CDP-2-C-methyl-D-erythritol 2-phosphate + ADP + H(+). The protein operates within isoprenoid biosynthesis; isopentenyl diphosphate biosynthesis via DXP pathway; isopentenyl diphosphate from 1-deoxy-D-xylulose 5-phosphate: step 3/6. Its function is as follows. Catalyzes the phosphorylation of the position 2 hydroxy group of 4-diphosphocytidyl-2C-methyl-D-erythritol. The chain is 4-diphosphocytidyl-2-C-methyl-D-erythritol kinase from Vibrio atlanticus (strain LGP32) (Vibrio splendidus (strain Mel32)).